The sequence spans 212 residues: 7-carboxy-7-deazaguanine synthase (212 aa).

Substrate contacts are provided by residues 22–24 (LQG) and R37. The Radical SAM core domain maps to 28–212 (NTGMPAVFVR…VQTHKWAGIE (185 aa)). The [4Fe-4S] cluster site is built by C41, C45, and C48. Position 50 (T50) interacts with Mg(2+). Position 78 (T78) interacts with substrate. S-adenosyl-L-methionine-binding positions include G80 and 122–124 (SPK).

It belongs to the radical SAM superfamily. 7-carboxy-7-deazaguanine synthase family. Homodimer. [4Fe-4S] cluster serves as cofactor. The cofactor is S-adenosyl-L-methionine. Mg(2+) is required as a cofactor.

The catalysed reaction is 6-carboxy-5,6,7,8-tetrahydropterin + H(+) = 7-carboxy-7-deazaguanine + NH4(+). It functions in the pathway purine metabolism; 7-cyano-7-deazaguanine biosynthesis. Its function is as follows. Catalyzes the complex heterocyclic radical-mediated conversion of 6-carboxy-5,6,7,8-tetrahydropterin (CPH4) to 7-carboxy-7-deazaguanine (CDG), a step common to the biosynthetic pathways of all 7-deazapurine-containing compounds. This is 7-carboxy-7-deazaguanine synthase from Neisseria meningitidis serogroup B (strain ATCC BAA-335 / MC58).